A 901-amino-acid polypeptide reads, in one-letter code: Protein translocase subunit SecA (901 aa).

ATP contacts are provided by residues Gln87, 105–109 (GEGKT), and Asp512. Zn(2+)-binding residues include Cys885, Cys887, Cys896, and His897.

This sequence belongs to the SecA family. Monomer and homodimer. Part of the essential Sec protein translocation apparatus which comprises SecA, SecYEG and auxiliary proteins SecDF-YajC and YidC. Zn(2+) is required as a cofactor.

It localises to the cell inner membrane. The protein localises to the cytoplasm. The catalysed reaction is ATP + H2O + cellular proteinSide 1 = ADP + phosphate + cellular proteinSide 2.. In terms of biological role, part of the Sec protein translocase complex. Interacts with the SecYEG preprotein conducting channel. Has a central role in coupling the hydrolysis of ATP to the transfer of proteins into and across the cell membrane, serving both as a receptor for the preprotein-SecB complex and as an ATP-driven molecular motor driving the stepwise translocation of polypeptide chains across the membrane. The polypeptide is Protein translocase subunit SecA (Salmonella enteritidis PT4 (strain P125109)).